A 971-amino-acid chain; its full sequence is Protein ALWAYS EARLY 1 (971 aa).

The span at 1–11 (MAPTRKSKSVN) shows a compositional bias: basic residues. Disordered regions lie at residues 1 to 40 (MAPT…LADK), 117 to 137 (SESE…LKRK), 197 to 260 (IEDF…MFEN), 326 to 371 (GLLE…GLED), and 421 to 507 (PKES…KISL). An SANT domain is found at 40-98 (KLGPQWTKRELVRFYDAYRKYVGDWKKVAAAVRNNRSVEMVETLFCMNRAYLSLPEGTA). Basic and acidic residues-rich tracts occupy residues 209-219 (KQLDADDDASR), 332-350 (SSPH…KKSN), and 424-440 (STQD…EVDS). Polar residues predominate over residues 450-470 (SSQGPAKQLKTAKTTVESSSA).

In terms of tissue distribution, expressed ubiquitously in vegetative and reproductive tissues.

The protein localises to the nucleus. The sequence is that of Protein ALWAYS EARLY 1 (ALY1) from Arabidopsis thaliana (Mouse-ear cress).